A 264-amino-acid chain; its full sequence is Indole-3-glycerol phosphate synthase (264 aa).

Belongs to the TrpC family.

It catalyses the reaction 1-(2-carboxyphenylamino)-1-deoxy-D-ribulose 5-phosphate + H(+) = (1S,2R)-1-C-(indol-3-yl)glycerol 3-phosphate + CO2 + H2O. It functions in the pathway amino-acid biosynthesis; L-tryptophan biosynthesis; L-tryptophan from chorismate: step 4/5. This Stenotrophomonas maltophilia (strain R551-3) protein is Indole-3-glycerol phosphate synthase.